The following is a 239-amino-acid chain: tRNA1(Val) (adenine(37)-N6)-methyltransferase (239 aa).

This sequence belongs to the methyltransferase superfamily. tRNA (adenine-N(6)-)-methyltransferase family.

It localises to the cytoplasm. The enzyme catalyses adenosine(37) in tRNA1(Val) + S-adenosyl-L-methionine = N(6)-methyladenosine(37) in tRNA1(Val) + S-adenosyl-L-homocysteine + H(+). Specifically methylates the adenine in position 37 of tRNA(1)(Val) (anticodon cmo5UAC). The sequence is that of tRNA1(Val) (adenine(37)-N6)-methyltransferase from Vibrio campbellii (strain ATCC BAA-1116).